A 233-amino-acid polypeptide reads, in one-letter code: Uridylate kinase (233 aa).

7–10 (KISG) contributes to the ATP binding site. Gly-49 lines the UMP pocket. Positions 50 and 54 each coordinate ATP. UMP contacts are provided by residues Asp-68 and 129-136 (TGNPFFTT). Residues Thr-156, Tyr-162, and Asp-165 each coordinate ATP.

It belongs to the UMP kinase family. In terms of assembly, homohexamer.

Its subcellular location is the cytoplasm. The catalysed reaction is UMP + ATP = UDP + ADP. It participates in pyrimidine metabolism; CTP biosynthesis via de novo pathway; UDP from UMP (UMPK route): step 1/1. Inhibited by UTP. Its function is as follows. Catalyzes the reversible phosphorylation of UMP to UDP. The polypeptide is Uridylate kinase (Neorickettsia sennetsu (strain ATCC VR-367 / Miyayama) (Ehrlichia sennetsu)).